We begin with the raw amino-acid sequence, 164 residues long: Transcription factor E (164 aa).

Residues 5-87 (NDKVIRGYLR…LWHLDFSDIE (83 aa)) enclose the HTH TFE/IIEalpha-type domain.

The protein belongs to the TFE family. As to quaternary structure, monomer. Interaction with RNA polymerase subunits RpoF and RpoE is necessary for Tfe stimulatory transcription activity. Able to interact with Tbp and RNA polymerase in the absence of DNA promoter. Interacts both with the preinitiation and elongation complexes.

In terms of biological role, transcription factor that plays a role in the activation of archaeal genes transcribed by RNA polymerase. Facilitates transcription initiation by enhancing TATA-box recognition by TATA-box-binding protein (Tbp), and transcription factor B (Tfb) and RNA polymerase recruitment. Not absolutely required for transcription in vitro, but particularly important in cases where Tbp or Tfb function is not optimal. It dynamically alters the nucleic acid-binding properties of RNA polymerases by stabilizing the initiation complex and destabilizing elongation complexes. Seems to translocate with the RNA polymerase following initiation and acts by binding to the non template strand of the transcription bubble in elongation complexes. The protein is Transcription factor E of Methanosarcina mazei (strain ATCC BAA-159 / DSM 3647 / Goe1 / Go1 / JCM 11833 / OCM 88) (Methanosarcina frisia).